The following is a 156-amino-acid chain: ATP synthase subunit b (156 aa).

A helical membrane pass occupies residues 11–31 (LIAFVVFVIFCMKYVWPPIIG).

The protein belongs to the ATPase B chain family. In terms of assembly, F-type ATPases have 2 components, F(1) - the catalytic core - and F(0) - the membrane proton channel. F(1) has five subunits: alpha(3), beta(3), gamma(1), delta(1), epsilon(1). F(0) has three main subunits: a(1), b(2) and c(10-14). The alpha and beta chains form an alternating ring which encloses part of the gamma chain. F(1) is attached to F(0) by a central stalk formed by the gamma and epsilon chains, while a peripheral stalk is formed by the delta and b chains.

The protein localises to the cell inner membrane. Functionally, f(1)F(0) ATP synthase produces ATP from ADP in the presence of a proton or sodium gradient. F-type ATPases consist of two structural domains, F(1) containing the extramembraneous catalytic core and F(0) containing the membrane proton channel, linked together by a central stalk and a peripheral stalk. During catalysis, ATP synthesis in the catalytic domain of F(1) is coupled via a rotary mechanism of the central stalk subunits to proton translocation. Its function is as follows. Component of the F(0) channel, it forms part of the peripheral stalk, linking F(1) to F(0). This is ATP synthase subunit b from Colwellia psychrerythraea (strain 34H / ATCC BAA-681) (Vibrio psychroerythus).